We begin with the raw amino-acid sequence, 1472 residues long: Vacuolar cation-transporting ATPase YPK9 (1472 aa).

M1 is subject to N-acetylmethionine. Composition is skewed to polar residues over residues 1-12 and 72-87; these read MDIPSSNQIQHG and SFQSSNLPSPHSSGNL. Disordered stretches follow at residues 1-32, 71-115, and 179-273; these read MDIPSSNQIQHGQRSERNRRMPRASFSSTATT, HSFQ…SRNP, and AKSY…DDVH. Residues 1–293 lie on the Cytoplasmic side of the membrane; sequence MDIPSSNQIQ…YHEKFYPQYA (293 aa). T95 is subject to Phosphothreonine. 2 stretches are compositionally biased toward low complexity: residues 103 to 115 and 211 to 222; these read SSAEQSRSSSRNP and SATHSSSSLSRY. S108 bears the Phosphoserine mark. The segment covering 234 to 243 has biased composition (acidic residues); that stretch reads SQTDEILEDE. The chain crosses the membrane as a helical span at residues 294 to 315; it reads PNLHYQRFYIAEEDLVIGIAAY. At 316–321 the chain is on the vacuolar side; the sequence is QTSKFW. A helical membrane pass occupies residues 322 to 344; it reads YIIYNLCCFLTFGLVYLLTRWLP. Residues 345–488 lie on the Cytoplasmic side of the membrane; it reads HLKVKLYGVK…INLRMKTTSE (144 aa). A helical transmembrane segment spans residues 489-511; it reads ILFNEVLHPFYVFQVFSIILWGI. Residues 512-514 are Vacuolar-facing; the sequence is DEY. Residues 515 to 533 form a helical membrane-spanning segment; the sequence is YYYAACIFLISVLSIFDSL. Topologically, residues 534 to 693 are cytoplasmic; the sequence is NEQKKVSRNL…PTGFKFYRDS (160 aa). Residues 694–713 traverse the membrane as a helical segment; sequence FKYIGFMSLIAIFGFCVSCV. Over 714–726 the chain is Vacuolar; that stretch reads QFIKLGLDKKTMI. The helical transmembrane segment at 727-748 threads the bilayer; sequence LRALDIITIVVPPALPATLTIG. The Cytoplasmic segment spans residues 749-1244; the sequence is TNFALSRLKE…ALVTSFACFQ (496 aa). Catalysis depends on D781, which acts as the 4-aspartylphosphate intermediate. 2 positions are modified to phosphoserine: S1117 and S1120. Mg(2+) is bound by residues D1187 and D1191. The chain crosses the membrane as a helical span at residues 1245-1264; the sequence is YMSLYSAIQFITITILYSRG. The Vacuolar portion of the chain corresponds to 1265 to 1271; the sequence is SNLGDFQ. The chain crosses the membrane as a helical span at residues 1272 to 1289; that stretch reads FLYIDLLLIVPIAICMSW. Topologically, residues 1290–1307 are cytoplasmic; sequence SKSYEKIDKKRPSANLVS. A helical membrane pass occupies residues 1308 to 1331; sequence PKILVPLLISVFLVFLFQFIPWII. Residues 1332 to 1351 are Vacuolar-facing; the sequence is VQKMSWYIKPIVGGDDAVQS. Residues 1352 to 1374 traverse the membrane as a helical segment; the sequence is SDNTVLFFVSNFQYILTAIVLSV. Over 1375 to 1387 the chain is Cytoplasmic; that stretch reads GPPYREPMSKNFE. A helical transmembrane segment spans residues 1388–1407; it reads FIVDITVSIGASLLLMTLDT. Residues 1408-1423 are Vacuolar-facing; that stretch reads ESYLGKMLQLTPISNS. The chain crosses the membrane as a helical span at residues 1424 to 1446; that stretch reads FTMFIIVWVILNYYAQLYIPPSI. At 1447–1472 the chain is on the cytoplasmic side; sequence KGWLKKKKSSKKYKLLIQEEMKLKEV.

The protein belongs to the cation transport ATPase (P-type) (TC 3.A.3) family. Type V subfamily.

The protein resides in the vacuole membrane. It carries out the reaction ATP + H2O = ADP + phosphate + H(+). Vacuolar transporter which plays a role in sequestration of divalent heavy metal ions. This chain is Vacuolar cation-transporting ATPase YPK9 (YPK9), found in Saccharomyces cerevisiae (strain ATCC 204508 / S288c) (Baker's yeast).